A 1872-amino-acid chain; its full sequence is Ral GTPase-activating protein subunit alpha-2 (1872 aa).

Positions 350–370 (DGAGSTEQDKSHSNSSTLSDR) are disordered. A phosphoserine mark is found at Ser-373, Ser-376, and Ser-379. Residues 445 to 469 (PDKKDVAQEDADKLGLSETDSKEAS) show a composition bias toward basic and acidic residues. The segment at 445 to 481 (PDKKDVAQEDADKLGLSETDSKEASSESSGHKRSSSW) is disordered. A Phosphoserine modification is found at Ser-486. A Phosphoserine; by PKB modification is found at Ser-696. 2 disordered regions span residues 711 to 730 (FRSA…NTVR) and 758 to 813 (QQVP…GITM). Thr-715 is modified (phosphothreonine; by PKB). Composition is skewed to polar residues over residues 758–768 (QQVPRSSSTSD) and 775–795 (SDSS…SEPK). Basic and acidic residues predominate over residues 796–810 (SVQESKGHVTHEHEG). Phosphoserine occurs at positions 819 and 820. Positions 831-851 (QQAHGRCRQRQTSESTGSDTV) are disordered. The span at 840 to 849 (RQTSESTGSD) shows a compositional bias: polar residues. Position 1592 is a phosphoserine (Ser-1592). A Rap-GAP domain is found at 1634–1842 (LKNLDSRQCR…EERALYLEAI (209 aa)).

In terms of assembly, component of the heterodimeric RalGAP2 complex with RALGAPB. Heterodimerization is required for activity. Abundantly expressed in testis, pancreas, lung, thymus, brown fat, and white fat.

Its subcellular location is the cytoplasm. Catalytic subunit of the heterodimeric RalGAP2 complex which acts as a GTPase activator for the Ras-like small GTPases RALA and RALB. This Mus musculus (Mouse) protein is Ral GTPase-activating protein subunit alpha-2 (Ralgapa2).